A 77-amino-acid chain; its full sequence is U8-lycotoxin-Ls1n (77 aa).

Residues M1 to A20 form the signal peptide. Residues Q21–K26 constitute a propeptide that is removed on maturation.

The protein belongs to the neurotoxin 19 (CSTX) family. 08 (U8-Lctx) subfamily. Post-translationally, contains 4 disulfide bonds. In terms of tissue distribution, expressed by the venom gland.

Its subcellular location is the secreted. The sequence is that of U8-lycotoxin-Ls1n from Lycosa singoriensis (Wolf spider).